The sequence spans 401 residues: 1-deoxy-D-xylulose 5-phosphate reductoisomerase (401 aa).

NADPH is bound by residues Thr10, Gly11, Ser12, Ile13, Gly36, Asn38, and Asn124. Lys125 contributes to the 1-deoxy-D-xylulose 5-phosphate binding site. Glu126 lines the NADPH pocket. Asp150 serves as a coordination point for Mn(2+). 1-deoxy-D-xylulose 5-phosphate contacts are provided by Ser151, Glu152, Ser186, and His209. Position 152 (Glu152) interacts with Mn(2+). Gly215 serves as a coordination point for NADPH. Ser222, Asn227, Lys228, and Glu231 together coordinate 1-deoxy-D-xylulose 5-phosphate. A Mn(2+)-binding site is contributed by Glu231.

It belongs to the DXR family. It depends on Mg(2+) as a cofactor. Mn(2+) is required as a cofactor.

It catalyses the reaction 2-C-methyl-D-erythritol 4-phosphate + NADP(+) = 1-deoxy-D-xylulose 5-phosphate + NADPH + H(+). Its pathway is isoprenoid biosynthesis; isopentenyl diphosphate biosynthesis via DXP pathway; isopentenyl diphosphate from 1-deoxy-D-xylulose 5-phosphate: step 1/6. Functionally, catalyzes the NADPH-dependent rearrangement and reduction of 1-deoxy-D-xylulose-5-phosphate (DXP) to 2-C-methyl-D-erythritol 4-phosphate (MEP). The protein is 1-deoxy-D-xylulose 5-phosphate reductoisomerase of Vibrio parahaemolyticus serotype O3:K6 (strain RIMD 2210633).